The primary structure comprises 90 residues: U7-theraphotoxin-Hhn1a 2 (90 aa).

A signal peptide spans 1 to 19 (MKIAIFTVVLALAVFAVLS). Residues 20–50 (FGWEANEKALSEEFTELIHEKEAASETEARE) constitute a propeptide that is removed on maturation. Disulfide bonds link C51/C65, C58/C70, and C64/C81.

This sequence belongs to the neurotoxin 10 (Hwtx-1) family. 13 (Hntx-13) subfamily. In terms of tissue distribution, expressed by the venom gland.

The protein resides in the secreted. In terms of biological role, ion channel inhibitor. The polypeptide is U7-theraphotoxin-Hhn1a 2 (Cyriopagopus hainanus (Chinese bird spider)).